Consider the following 226-residue polypeptide: Translation initiation factor IF-3 (226 aa).

The disordered stretch occupies residues 195–226; that stretch reads FVPLAPLSPEDLIEEPELESESDSDAEPESDN. Residues 205 to 226 are compositionally biased toward acidic residues; the sequence is DLIEEPELESESDSDAEPESDN.

The protein belongs to the IF-3 family. In terms of assembly, monomer.

Its subcellular location is the cytoplasm. Functionally, IF-3 binds to the 30S ribosomal subunit and shifts the equilibrium between 70S ribosomes and their 50S and 30S subunits in favor of the free subunits, thus enhancing the availability of 30S subunits on which protein synthesis initiation begins. The polypeptide is Translation initiation factor IF-3 (Chlorobium chlorochromatii (strain CaD3)).